The chain runs to 191 residues: dCTP deaminase (191 aa).

DCTP is bound by residues 112-117, 136-138, Gln-157, Tyr-173, and Gln-183; these read KSTYAR and TLE. The Proton donor/acceptor role is filled by Glu-138.

It belongs to the dCTP deaminase family. As to quaternary structure, homotrimer.

The enzyme catalyses dCTP + H2O + H(+) = dUTP + NH4(+). The protein operates within pyrimidine metabolism; dUMP biosynthesis; dUMP from dCTP (dUTP route): step 1/2. Its function is as follows. Catalyzes the deamination of dCTP to dUTP. The protein is dCTP deaminase of Xylella fastidiosa (strain M12).